We begin with the raw amino-acid sequence, 154 residues long: Transcriptional repressor NrdR (154 aa).

A zinc finger spans residues 3–34; it reads CPFCGANDTKVIDSRLVAEGEQVRRRRECVAC. The ATP-cone domain maps to 49–139; the sequence is PRLIKQDGTR…VYRRFQDLDE (91 aa).

It belongs to the NrdR family. Requires Zn(2+) as cofactor.

Its function is as follows. Negatively regulates transcription of bacterial ribonucleotide reductase nrd genes and operons by binding to NrdR-boxes. The protein is Transcriptional repressor NrdR of Pseudomonas putida (strain GB-1).